A 212-amino-acid chain; its full sequence is B3 domain-containing protein Os04g0386900 (212 aa).

The segment at 1 to 78 (MRAATALPSI…PRPPEPEPEK (78 aa)) is disordered. 2 stretches are compositionally biased toward low complexity: residues 8–23 (PSIPSSSSPSPMASDP) and 36–46 (DAGAEDPAAVD). The segment at residues 93–191 (FTCIMCKSHV…EFRVQVLRAE (99 aa)) is a DNA-binding region (TF-B3).

The protein localises to the nucleus. This chain is B3 domain-containing protein Os04g0386900, found in Oryza sativa subsp. japonica (Rice).